We begin with the raw amino-acid sequence, 668 residues long: Transketolase (668 aa).

His-28 contributes to the substrate binding site. Thiamine diphosphate is bound by residues His-68 and 116–118; that span reads GPL. Asp-157 contributes to the Mg(2+) binding site. Gly-158 and Asn-187 together coordinate thiamine diphosphate. Residues Asn-187 and Ile-189 each coordinate Mg(2+). Positions 263, 358, and 385 each coordinate substrate. His-263 lines the thiamine diphosphate pocket. The active-site Proton donor is the Glu-412. Phe-438 serves as a coordination point for thiamine diphosphate. Substrate is bound by residues His-462, Asp-470, His-474, and Arg-521.

The protein belongs to the transketolase family. In terms of assembly, homodimer. The cofactor is Mg(2+). Thiamine diphosphate is required as a cofactor.

The catalysed reaction is D-sedoheptulose 7-phosphate + D-glyceraldehyde 3-phosphate = aldehydo-D-ribose 5-phosphate + D-xylulose 5-phosphate. Its function is as follows. Catalyzes the transfer of a two-carbon ketol group from a ketose donor to an aldose acceptor, likely via a covalent intermediate with the cofactor thiamine pyrophosphate. Can use L-erythrulose as donor and D-ribose-5-phosphate as acceptor substrates, forming glycolaldehyde and D-sedoheptulose-7-phosphate. For synthetic purposes, is able to use hydroxypyruvate (HPA) as donor substrate, making the reaction irreversible due to the release of carbon dioxide, and various aldehydes as acceptor substrates, which leads to the corresponding ketoses. Thus, using hydroxypyruvate as donor and three different aldehydes as acceptors, i.e. glycolaldehyde, D-glyceraldehyde and butyraldehyde, the enzyme stereoselectively forms the corresponding products L-erythrulose, D-xylulose and (3S)-1,3-dihydroxyhexan-2-one, respectively. This chain is Transketolase, found in Geobacillus stearothermophilus (Bacillus stearothermophilus).